The sequence spans 217 residues: Adenylate kinase (217 aa).

11–16 (GAGKGT) lines the ATP pocket. Positions 31–60 (STGDMFREAMANETPVGLEAKSYIDKGDLV) are NMP. Residues T32, R37, 58 to 60 (DLV), 86 to 89 (GFPR), and Q93 contribute to the AMP site. Positions 127–165 (ARYICKNCGATYNKISNPTKVEGTCDRCGGHEFFQREDD) are LID. ATP is bound at residue R128. Residues C131 and C134 each coordinate Zn(2+). 137-138 (TY) contributes to the ATP binding site. 2 residues coordinate Zn(2+): C151 and C154. Residues R162 and R173 each contribute to the AMP site. Q201 contacts ATP.

This sequence belongs to the adenylate kinase family. Monomer.

Its subcellular location is the cytoplasm. The enzyme catalyses AMP + ATP = 2 ADP. Its pathway is purine metabolism; AMP biosynthesis via salvage pathway; AMP from ADP: step 1/1. Its function is as follows. Catalyzes the reversible transfer of the terminal phosphate group between ATP and AMP. Plays an important role in cellular energy homeostasis and in adenine nucleotide metabolism. This chain is Adenylate kinase, found in Lactobacillus gasseri (strain ATCC 33323 / DSM 20243 / BCRC 14619 / CIP 102991 / JCM 1131 / KCTC 3163 / NCIMB 11718 / NCTC 13722 / AM63).